Consider the following 205-residue polypeptide: Methylthioribulose-1-phosphate dehydratase (205 aa).

Cysteine 75 provides a ligand contact to substrate. The Zn(2+) site is built by histidine 93 and histidine 95. Glutamate 116 (proton donor/acceptor) is an active-site residue. A Zn(2+)-binding site is contributed by histidine 171.

This sequence belongs to the aldolase class II family. MtnB subfamily. It depends on Zn(2+) as a cofactor.

The protein localises to the cytoplasm. The enzyme catalyses 5-(methylsulfanyl)-D-ribulose 1-phosphate = 5-methylsulfanyl-2,3-dioxopentyl phosphate + H2O. Its pathway is amino-acid biosynthesis; L-methionine biosynthesis via salvage pathway; L-methionine from S-methyl-5-thio-alpha-D-ribose 1-phosphate: step 2/6. Its function is as follows. Catalyzes the dehydration of methylthioribulose-1-phosphate (MTRu-1-P) into 2,3-diketo-5-methylthiopentyl-1-phosphate (DK-MTP-1-P). The sequence is that of Methylthioribulose-1-phosphate dehydratase from Kluyveromyces lactis (strain ATCC 8585 / CBS 2359 / DSM 70799 / NBRC 1267 / NRRL Y-1140 / WM37) (Yeast).